Consider the following 422-residue polypeptide: Histone deacetylase B (422 aa).

Asp102 contacts substrate. The active-site Proton acceptor is His144. Residue Gly152 participates in substrate binding. Residues Asp179, His181, and Asp268 each coordinate a divalent metal cation. Tyr307 contacts substrate. The interval 399-422 (IDFDRDEDSKENMDKRKKKHNDFS) is disordered. Positions 413–422 (KRKKKHNDFS) are enriched in basic residues.

It belongs to the histone deacetylase family. HD type 1 subfamily.

It is found in the nucleus. Its subcellular location is the cytoplasm. It catalyses the reaction N(6)-acetyl-L-lysyl-[histone] + H2O = L-lysyl-[histone] + acetate. Its activity is regulated as follows. Its activity is inhibited by trichostatin A (TSA), a well known histone deacetylase inhibitor. Cytosolic activity is refractory to inhibition by TSA, while the nuclear activity is inhibited completely. In terms of biological role, responsible for the deacetylation of lysine residues on the N-terminal part of the core histones (H2A, H2B, H3 and H4). Histone deacetylation plays an important role in transcriptional regulation, cell cycle progression and developmental events. Histone deacetylases act via the formation of large multiprotein complexes. May play a role in the regulation of the timing of gene expression during the development and in the definition aspects of the phenotype that mediate social behavior in genetically heterogeneous groups. The polypeptide is Histone deacetylase B (hdaB) (Dictyostelium discoideum (Social amoeba)).